The sequence spans 506 residues: UDP-N-acetylmuramoyl-L-alanyl-D-glutamate--2,6-diaminopimelate ligase (506 aa).

S42 serves as a coordination point for UDP-N-acetyl-alpha-D-muramoyl-L-alanyl-D-glutamate. 125–131 (GTSGKTT) serves as a coordination point for ATP. Residues 166 to 167 (TT), S193, and R201 each bind UDP-N-acetyl-alpha-D-muramoyl-L-alanyl-D-glutamate. K233 is modified (N6-carboxylysine). Meso-2,6-diaminopimelate contacts are provided by residues R395, 419–422 (DNPR), G475, and E479. Residues 419–422 (DNPR) carry the Meso-diaminopimelate recognition motif motif.

The protein belongs to the MurCDEF family. MurE subfamily. The cofactor is Mg(2+). Carboxylation is probably crucial for Mg(2+) binding and, consequently, for the gamma-phosphate positioning of ATP.

It localises to the cytoplasm. The enzyme catalyses UDP-N-acetyl-alpha-D-muramoyl-L-alanyl-D-glutamate + meso-2,6-diaminopimelate + ATP = UDP-N-acetyl-alpha-D-muramoyl-L-alanyl-gamma-D-glutamyl-meso-2,6-diaminopimelate + ADP + phosphate + H(+). The protein operates within cell wall biogenesis; peptidoglycan biosynthesis. In terms of biological role, catalyzes the addition of meso-diaminopimelic acid to the nucleotide precursor UDP-N-acetylmuramoyl-L-alanyl-D-glutamate (UMAG) in the biosynthesis of bacterial cell-wall peptidoglycan. The chain is UDP-N-acetylmuramoyl-L-alanyl-D-glutamate--2,6-diaminopimelate ligase from Streptomyces coelicolor (strain ATCC BAA-471 / A3(2) / M145).